Reading from the N-terminus, the 67-residue chain is MRSKHNELKSPIMSCSKRTEWKSILGPLIFRQQMILTQNLNQKLKTIKACMYQIRKLSKLKALYRGL.

This sequence belongs to the rhabdoviruses C protein family.

Functionally, seems to stimulates transcription by the viral polymerase. May play a role in viral pathogenesis or transmission by insects vectors. The protein is Protein C' (P) of Aedes (Bovine).